The sequence spans 327 residues: Phenylalanine--tRNA ligase alpha subunit (327 aa).

E252 is a Mg(2+) binding site.

The protein belongs to the class-II aminoacyl-tRNA synthetase family. Phe-tRNA synthetase alpha subunit type 1 subfamily. Tetramer of two alpha and two beta subunits. The cofactor is Mg(2+).

Its subcellular location is the cytoplasm. It catalyses the reaction tRNA(Phe) + L-phenylalanine + ATP = L-phenylalanyl-tRNA(Phe) + AMP + diphosphate + H(+). This chain is Phenylalanine--tRNA ligase alpha subunit, found in Klebsiella pneumoniae (strain 342).